The chain runs to 445 residues: Argininosuccinate synthase (445 aa).

ATP-binding positions include 17 to 25 (AFSGGLDTS) and alanine 43. Residue tyrosine 99 participates in L-citrulline binding. Positions 129 and 131 each coordinate ATP. Residues threonine 131, asparagine 135, and aspartate 136 each coordinate L-aspartate. An L-citrulline-binding site is contributed by asparagine 135. Aspartate 136 serves as a coordination point for ATP. L-citrulline is bound by residues arginine 139 and serine 192. Aspartate 194 provides a ligand contact to ATP. Residues threonine 201, glutamate 203, and glutamate 280 each contribute to the L-citrulline site.

This sequence belongs to the argininosuccinate synthase family. Type 2 subfamily. As to quaternary structure, homotetramer.

It is found in the cytoplasm. It catalyses the reaction L-citrulline + L-aspartate + ATP = 2-(N(omega)-L-arginino)succinate + AMP + diphosphate + H(+). It functions in the pathway amino-acid biosynthesis; L-arginine biosynthesis; L-arginine from L-ornithine and carbamoyl phosphate: step 2/3. The chain is Argininosuccinate synthase from Rhodopseudomonas palustris (strain ATCC BAA-98 / CGA009).